The sequence spans 440 residues: Protein scalloped (440 aa).

Residues 32-65 (TEQQAVGPGTIPSPWTPVNAGPPGALGSADTNGS) form a disordered region. A DNA-binding region (TEA) is located at residues 86–162 (SADAEGVWSP…QVLARRKLRE (77 aa)).

In terms of assembly, the C-terminus of sd interacts with the C-terminal serine-rich protein domain of vg, to form a complex which acts as a selector for wing development. Interacts (via C-terminus) with yki (via N-terminus) and this interaction enhances its transcriptional activity. In terms of tissue distribution, subset of neuroblasts in the central nervous system and in the peripheral sense organs of the embryo. Expressed in the developing wing primordia initially along the D/V wing boundary, and by the late third larval instar, maximal expression is seen in cells at the D/V wing disk boundary. Less expression in cells located farther from this boundary. Also expressed in wing progenitor cells.

It localises to the nucleus. Its function is as follows. Transcription factor which plays a key role in the Hippo/SWH (Sav/Wts/Hpo) signaling pathway, a signaling pathway that plays a pivotal role in organ size control and tumor suppression by restricting proliferation and promoting apoptosis. The core of this pathway is composed of a kinase cascade wherein Hippo (Hpo), in complex with its regulatory protein Salvador (Sav), phosphorylates and activates Warts (Wts) in complex with its regulatory protein Mats, which in turn phosphorylates and inactivates the Yorkie (Yki) oncoprotein. The Hippo/SWH signaling pathway inhibits the activity of the transcriptional complex formed by Scalloped (sd) and Yki and the target genes of this pathway include cyclin-E (cycE), diap1 and bantam. Sd promotes nuclear localization of Yki. Involved in the regulation of cell-specific gene expression during development, particularly in the differentiation of the nervous system. When in combination with vestigial (vg) it acts as a transcriptional activation complex that regulates gene expression in the wing. Binding to vg switches the DNA target selectivity of sd. Required autonomously for cell proliferation and viability within the wing blade. Required for proper sensory organ precursor (SOP) differentiation at the wing margin; required for correct expression of sens. The protein is Protein scalloped (sd) of Drosophila melanogaster (Fruit fly).